A 181-amino-acid polypeptide reads, in one-letter code: Salmonella anti-inflammatory response activator (181 aa).

A helical membrane pass occupies residues 4–24 (FVYIYILVIYGSYLWFSLGGN).

Interacts with host (human) STAT3.

The protein resides in the membrane. It is found in the host cytoplasm. Its function is as follows. A Salmonella strain-specific effector that induces a host STAT3-dependent anti-inflammatory pathway. In bacteria-infected host cells (human) leads to phosphorylation of host STAT3, at least on 'Tyr-705' and interleukin-10 (IL-10, IL10) production; expressing the gene alone in host cells induces STAT3 phosphorylation and IL-10 production. IL-10 production requires STAT3 in infected cells. Contributes to virulence in mouse infection models. Encoded in only a few S.typhimurium serovars, it may be a specific effector for adaptation to bovine hosts. The polypeptide is Salmonella anti-inflammatory response activator (Salmonella typhimurium (strain 14028s / SGSC 2262)).